Consider the following 299-residue polypeptide: GTP cyclohydrolase FolE2 (299 aa).

The interval 1–25 (MKTKQWPSKTERHKRFGSVPPVAGK) is disordered.

This sequence belongs to the GTP cyclohydrolase IV family.

It catalyses the reaction GTP + H2O = 7,8-dihydroneopterin 3'-triphosphate + formate + H(+). The protein operates within cofactor biosynthesis; 7,8-dihydroneopterin triphosphate biosynthesis; 7,8-dihydroneopterin triphosphate from GTP: step 1/1. Converts GTP to 7,8-dihydroneopterin triphosphate. The polypeptide is GTP cyclohydrolase FolE2 (Halalkalibacterium halodurans (strain ATCC BAA-125 / DSM 18197 / FERM 7344 / JCM 9153 / C-125) (Bacillus halodurans)).